The chain runs to 226 residues: Ribonuclease 3 (226 aa).

The 123-residue stretch at 7 to 129 folds into the RNase III domain; the sequence is LPRLCRTLGY…IIGAVYLDAD (123 aa). Position 42 (E42) interacts with Mg(2+). D46 is an active-site residue. Mg(2+) is bound by residues D115 and E118. E118 is an active-site residue. One can recognise a DRBM domain in the interval 156–226; it reads DAKTLLQEYL…AAQVLELLNQ (71 aa).

It belongs to the ribonuclease III family. Homodimer. It depends on Mg(2+) as a cofactor.

It is found in the cytoplasm. The enzyme catalyses Endonucleolytic cleavage to 5'-phosphomonoester.. Its function is as follows. Digests double-stranded RNA. Involved in the processing of primary rRNA transcript to yield the immediate precursors to the large and small rRNAs (23S and 16S). Processes some mRNAs, and tRNAs when they are encoded in the rRNA operon. Processes pre-crRNA and tracrRNA of type II CRISPR loci if present in the organism. The chain is Ribonuclease 3 from Shewanella amazonensis (strain ATCC BAA-1098 / SB2B).